Consider the following 303-residue polypeptide: Ribosomal RNA small subunit methyltransferase H (303 aa).

S-adenosyl-L-methionine contacts are provided by residues Gly-33–His-35, Asp-52, Phe-79, Asp-97, and Gln-104.

This sequence belongs to the methyltransferase superfamily. RsmH family.

The protein localises to the cytoplasm. The enzyme catalyses cytidine(1402) in 16S rRNA + S-adenosyl-L-methionine = N(4)-methylcytidine(1402) in 16S rRNA + S-adenosyl-L-homocysteine + H(+). Its function is as follows. Specifically methylates the N4 position of cytidine in position 1402 (C1402) of 16S rRNA. In Wolinella succinogenes (strain ATCC 29543 / DSM 1740 / CCUG 13145 / JCM 31913 / LMG 7466 / NCTC 11488 / FDC 602W) (Vibrio succinogenes), this protein is Ribosomal RNA small subunit methyltransferase H.